We begin with the raw amino-acid sequence, 158 residues long: SsrA-binding protein (158 aa).

The tract at residues 131 to 158 is disordered; that stretch reads YDKRQTLRERQDKREADRAMSSHRRLGE.

The protein belongs to the SmpB family.

The protein localises to the cytoplasm. Its function is as follows. Required for rescue of stalled ribosomes mediated by trans-translation. Binds to transfer-messenger RNA (tmRNA), required for stable association of tmRNA with ribosomes. tmRNA and SmpB together mimic tRNA shape, replacing the anticodon stem-loop with SmpB. tmRNA is encoded by the ssrA gene; the 2 termini fold to resemble tRNA(Ala) and it encodes a 'tag peptide', a short internal open reading frame. During trans-translation Ala-aminoacylated tmRNA acts like a tRNA, entering the A-site of stalled ribosomes, displacing the stalled mRNA. The ribosome then switches to translate the ORF on the tmRNA; the nascent peptide is terminated with the 'tag peptide' encoded by the tmRNA and targeted for degradation. The ribosome is freed to recommence translation, which seems to be the essential function of trans-translation. The protein is SsrA-binding protein of Clavibacter michiganensis subsp. michiganensis (strain NCPPB 382).